A 2377-amino-acid polypeptide reads, in one-letter code: DNA (cytosine-5-)-methyltransferase DMT5 (2377 aa).

Residues 24-56 (GTADGAVNGGNIPNSQSQKRKRASPSPEIESEE) form a disordered region. The region spanning 62–126 (YEIDYIADSR…KNPGKPRLSP (65 aa)) is the Chromo; shadow subtype domain. The segment at 150–282 (GKSRAASSTD…KSSLPKAKLR (133 aa)) is disordered. Residues 201–213 (PTSKKVHPNKKCK) are compositionally biased toward basic residues. 2 stretches are compositionally biased toward acidic residues: residues 217–238 (DDES…DDND) and 245–263 (EDDE…ESDE). Over residues 268–282 (PAKKTKSSLPKAKLR) the composition is skewed to basic residues. In terms of domain architecture, SAM-dependent MTase C5-type spans 347-753 (LRVATMCSGT…IAALKVACHK (407 aa)). Cys-440 is an active-site residue. Residues 1450–1771 (AERPVMVRGG…RSIATFMGIH (322 aa)) form the Helicase ATP-binding domain. 1463–1470 (DQVGYGKT) is a binding site for ATP. Disordered stretches follow at residues 1642-1680 (KGQA…ENSK), 2313-2334 (KGRG…TVKS), and 2347-2377 (SSFR…SDII). Positions 1645–1669 (AYRDKHDSDSKAKPITKEELERWEA) are enriched in basic and acidic residues. Positions 2152–2315 (KLEHLVNLIH…EIPQEEYKGR (164 aa)) constitute a Helicase C-terminal domain. Residues 2317-2334 (SSISMTNEKRTPTLTVKS) are compositionally biased toward polar residues. The segment covering 2363 to 2377 (GVSDDDENSELSDII) has biased composition (acidic residues).

In the N-terminal section; belongs to the class I-like SAM-binding methyltransferase superfamily. C5-methyltransferase family. It in the C-terminal section; belongs to the SNF2/RAD54 helicase family. Interacts with SWI6. It depends on Mg(2+) as a cofactor.

The protein localises to the nucleus. It localises to the chromosome. It catalyses the reaction a 2'-deoxycytidine in DNA + S-adenosyl-L-methionine + ATP + H2O = a 5-methyl-2'-deoxycytidine in DNA + S-adenosyl-L-homocysteine + ADP + phosphate + 2 H(+). With respect to regulation, hemimethylated DNA substrates stimulate ATP hydrolysis and this is a prerequisite for methyltransferase activity. Functionally, ATP-dependent cytosine methylase that maintains DNA methylation by acting at hemimethylated palindromic 5'-CG-3' sites to produce symmetrically methylated DNA strands. DNA methylation may play a role in transcriptional silencing, particularly at transposable elements. The sequence is that of DNA (cytosine-5-)-methyltransferase DMT5 from Cryptococcus neoformans var. grubii serotype A (strain H99 / ATCC 208821 / CBS 10515 / FGSC 9487) (Filobasidiella neoformans var. grubii).